The chain runs to 208 residues: Imidazoleglycerol-phosphate dehydratase (208 aa).

The protein belongs to the imidazoleglycerol-phosphate dehydratase family.

Its subcellular location is the cytoplasm. The enzyme catalyses D-erythro-1-(imidazol-4-yl)glycerol 3-phosphate = 3-(imidazol-4-yl)-2-oxopropyl phosphate + H2O. It participates in amino-acid biosynthesis; L-histidine biosynthesis; L-histidine from 5-phospho-alpha-D-ribose 1-diphosphate: step 6/9. The sequence is that of Imidazoleglycerol-phosphate dehydratase from Paenarthrobacter aurescens (strain TC1).